We begin with the raw amino-acid sequence, 545 residues long: Glucose-6-phosphate isomerase (545 aa).

Glu-351 functions as the Proton donor in the catalytic mechanism. Active-site residues include His-382 and Lys-510.

Belongs to the GPI family.

The protein resides in the cytoplasm. It catalyses the reaction alpha-D-glucose 6-phosphate = beta-D-fructose 6-phosphate. Its pathway is carbohydrate biosynthesis; gluconeogenesis. It participates in carbohydrate degradation; glycolysis; D-glyceraldehyde 3-phosphate and glycerone phosphate from D-glucose: step 2/4. Functionally, catalyzes the reversible isomerization of glucose-6-phosphate to fructose-6-phosphate. The protein is Glucose-6-phosphate isomerase of Shewanella baltica (strain OS195).